The chain runs to 635 residues: Biosynthetic arginine decarboxylase (635 aa).

Lys-100 is modified (N6-(pyridoxal phosphate)lysine). 282–292 (LDIGGGLGVDY) is a binding site for substrate.

The protein belongs to the Orn/Lys/Arg decarboxylase class-II family. SpeA subfamily. Mg(2+) is required as a cofactor. Requires pyridoxal 5'-phosphate as cofactor.

The enzyme catalyses L-arginine + H(+) = agmatine + CO2. It participates in amine and polyamine biosynthesis; agmatine biosynthesis; agmatine from L-arginine: step 1/1. Its function is as follows. Catalyzes the biosynthesis of agmatine from arginine. The chain is Biosynthetic arginine decarboxylase from Trichlorobacter lovleyi (strain ATCC BAA-1151 / DSM 17278 / SZ) (Geobacter lovleyi).